Reading from the N-terminus, the 74-residue chain is GHAAANCALARVATALTRRVPASRHGLAEGGTPPWTLLLAVAAVAVLGVVAISLLRRALRIRFRYSKSIQTLRV.

Residues 1-34 (GHAAANCALARVATALTRRVPASRHGLAEGGTPP) lie on the Virion surface side of the membrane. A helical membrane pass occupies residues 35-55 (WTLLLAVAAVAVLGVVAISLL). The Intravirion segment spans residues 56 to 73 (RRALRIRFRYSKSIQTLR).

The protein belongs to the chordopoxvirinae L1 protein family.

It localises to the virion membrane. The sequence is that of Protein F9 homolog from Capra hircus (Goat).